The primary structure comprises 806 residues: Phenylalanine--tRNA ligase beta subunit (806 aa).

In terms of domain architecture, tRNA-binding spans 40–153 (FNSPDYLQLA…ADAIIIDHVS (114 aa)). In terms of domain architecture, B5 spans 413–487 (PFSKKLTVNF…KLIDINKLKP (75 aa)). D465, D471, E474, and E475 together coordinate Mg(2+).

The protein belongs to the phenylalanyl-tRNA synthetase beta subunit family. Type 1 subfamily. Tetramer of two alpha and two beta subunits. Mg(2+) serves as cofactor.

Its subcellular location is the cytoplasm. It catalyses the reaction tRNA(Phe) + L-phenylalanine + ATP = L-phenylalanyl-tRNA(Phe) + AMP + diphosphate + H(+). This Mycoplasma genitalium (strain ATCC 33530 / DSM 19775 / NCTC 10195 / G37) (Mycoplasmoides genitalium) protein is Phenylalanine--tRNA ligase beta subunit (pheT).